We begin with the raw amino-acid sequence, 1006 residues long: Collagen alpha-2(I) chain (1006 aa).

The disordered stretch occupies residues 1 to 84 (SGGFDFSFLP…GFPGTPGLPG (84 aa)). 4-hydroxyproline is present on residues Pro-10, Pro-13, Pro-35, and Pro-41. Positions 28–64 (LMGPRGPPGASGAPGPQGFQGPAGEPGEPGQTGPAGA) are enriched in low complexity. A 5-hydroxylysine; alternate modification is found at Lys-86. The O-linked (Gal...) hydroxylysine; alternate glycan is linked to Lys-86. The tract at residues 99–1006 (GQPGAAGVKG…FGYEGDFYRA (908 aa)) is disordered. Composition is skewed to low complexity over residues 142–163 (SRGSDGSVGPVGPAGPIGSAGP) and 209–230 (PGANGLTGAKGAAGLPGVAGAP). The span at 264 to 273 (GESGGKGEPG) shows a compositional bias: gly residues. Low complexity predominate over residues 274–284 (SAGPQGPPGSS). A compositionally biased stretch (gly residues) spans 306 to 315 (GLRGGPGSRG). Over residues 328–344 (PAGARGASGPAGVRGPS) the composition is skewed to low complexity. Pro-350 and Pro-353 each carry 4-hydroxyproline. A compositionally biased stretch (low complexity) spans 379-398 (LPGIDGRPGPIGPAGARGEA). Over residues 447–456 (GVQGGKGEQG) the composition is skewed to gly residues. Low complexity-rich tracts occupy residues 503 to 520 (PGESGAVGPSGAIGSRGP) and 532 to 542 (EPGVVGAPGTA). The span at 543 to 552 (GPAGSGGLPG) shows a compositional bias: gly residues. Low complexity-rich tracts occupy residues 585–615 (AVGAPGPAGATGDRGEAGAAGPAGPAGPRGS) and 622–642 (VGPAGPNGFAGPAGAAGQPGA). The span at 643–652 (KGERGTKGPK) shows a compositional bias: basic and acidic residues. Low complexity predominate over residues 660 to 670 (PTGPVGSAGPA). A compositionally biased stretch (gly residues) spans 680-689 (GSRGDGGPPG). Positions 691 to 700 (TGFPGAAGRT) are enriched in low complexity. Residues 737–746 (GETGAGGPPG) are compositionally biased toward gly residues. Composition is skewed to low complexity over residues 754–781 (SGEPGTAGPPGTAGPQGLLGAPGILGLP) and 789–799 (LPGVAGAVGEP). Over residues 800–810 (GPLGIGPPGAR) the composition is skewed to gly residues. Residues 837–882 (YAGNPGPVGAAGAPGPHGAVGPAGKHGNRGEPGPVGSAGPVGALGP) show a composition bias toward low complexity. The span at 892–903 (RGDKGEAGDKGP) shows a compositional bias: basic and acidic residues. Over residues 976–988 (SGPPGPPGPPGPP) the composition is skewed to pro residues.

The protein belongs to the fibrillar collagen family. In terms of assembly, trimers of one alpha 2(I) and two alpha 1(I) chains. Interacts (via C-terminus) with TMEM131 (via PapD-L domain); the interaction is direct and is involved in assembly and TRAPPIII ER-to-Golgi transport complex-dependent secretion of collagen. Prolines at the third position of the tripeptide repeating unit (G-X-Y) are hydroxylated in some or all of the chains. Expressed in bones.

The protein resides in the secreted. Its subcellular location is the extracellular space. It is found in the extracellular matrix. Type I collagen is a member of group I collagen (fibrillar forming collagen). The chain is Collagen alpha-2(I) chain from Choloepus hoffmanni (Hoffmann's two-fingered sloth).